The chain runs to 200 residues: Endoribonuclease YbeY (200 aa).

Zn(2+) contacts are provided by His-120, His-124, and His-130.

This sequence belongs to the endoribonuclease YbeY family. It depends on Zn(2+) as a cofactor.

The protein localises to the cytoplasm. Functionally, single strand-specific metallo-endoribonuclease involved in late-stage 70S ribosome quality control and in maturation of the 3' terminus of the 16S rRNA. This chain is Endoribonuclease YbeY, found in Corynebacterium efficiens (strain DSM 44549 / YS-314 / AJ 12310 / JCM 11189 / NBRC 100395).